The chain runs to 166 residues: Large ribosomal subunit protein uL10 (166 aa).

Belongs to the universal ribosomal protein uL10 family. Part of the ribosomal stalk of the 50S ribosomal subunit. The N-terminus interacts with L11 and the large rRNA to form the base of the stalk. The C-terminus forms an elongated spine to which L12 dimers bind in a sequential fashion forming a multimeric L10(L12)X complex.

In terms of biological role, forms part of the ribosomal stalk, playing a central role in the interaction of the ribosome with GTP-bound translation factors. The sequence is that of Large ribosomal subunit protein uL10 from Staphylococcus haemolyticus (strain JCSC1435).